Consider the following 342-residue polypeptide: Phosphoribosylformylglycinamidine cyclo-ligase (342 aa).

This sequence belongs to the AIR synthase family.

It is found in the cytoplasm. The catalysed reaction is 2-formamido-N(1)-(5-O-phospho-beta-D-ribosyl)acetamidine + ATP = 5-amino-1-(5-phospho-beta-D-ribosyl)imidazole + ADP + phosphate + H(+). Its pathway is purine metabolism; IMP biosynthesis via de novo pathway; 5-amino-1-(5-phospho-D-ribosyl)imidazole from N(2)-formyl-N(1)-(5-phospho-D-ribosyl)glycinamide: step 2/2. The polypeptide is Phosphoribosylformylglycinamidine cyclo-ligase (Staphylococcus aureus (strain MSSA476)).